Consider the following 224-residue polypeptide: UPF0758 protein PSPA7_6095 (224 aa).

Residues 102–224 (VLESPQAVRD…PLSLAEYGWM (123 aa)) enclose the MPN domain. Residues His-173, His-175, and Asp-186 each contribute to the Zn(2+) site. The short motif at 173 to 186 (HNHPSGDARPSLAD) is the JAMM motif element.

This sequence belongs to the UPF0758 family.

This chain is UPF0758 protein PSPA7_6095, found in Pseudomonas paraeruginosa (strain DSM 24068 / PA7) (Pseudomonas aeruginosa (strain PA7)).